A 272-amino-acid polypeptide reads, in one-letter code: Glutamate racemase (272 aa).

Residues 16-17 (DS) and 48-49 (YG) each bind substrate. The active-site Proton donor/acceptor is C79. 80-81 (NT) serves as a coordination point for substrate. C191 serves as the catalytic Proton donor/acceptor. 192–193 (TH) provides a ligand contact to substrate.

It belongs to the aspartate/glutamate racemases family.

It catalyses the reaction L-glutamate = D-glutamate. Its pathway is cell wall biogenesis; peptidoglycan biosynthesis. In terms of biological role, provides the (R)-glutamate required for cell wall biosynthesis. The sequence is that of Glutamate racemase from Chlorobaculum parvum (strain DSM 263 / NCIMB 8327) (Chlorobium vibrioforme subsp. thiosulfatophilum).